A 127-amino-acid polypeptide reads, in one-letter code: Large ribosomal subunit protein bL17 (127 aa).

Belongs to the bacterial ribosomal protein bL17 family. In terms of assembly, part of the 50S ribosomal subunit. Contacts protein L32.

The chain is Large ribosomal subunit protein bL17 from Lactobacillus johnsonii (strain CNCM I-12250 / La1 / NCC 533).